The primary structure comprises 1166 residues: Zinc finger CCHC domain-containing protein 2 (1166 aa).

4 disordered regions span residues 1 to 85 (MLRM…GGHA), 205 to 240 (RAEGSRGSVEDEPSGDGEQDAEKDGPGPEGSGCAKL), 550 to 668 (SSAD…ARFS), and 904 to 982 (PASF…ISAV). Pro residues predominate over residues 43–64 (PPPPPTGLPRGPPPPPSPPRGL). The span at 65–76 (EPPVASGPTAGA) shows a compositional bias: low complexity. Over residues 214 to 223 (EDEPSGDGEQ) the composition is skewed to acidic residues. Residues 572–587 (PQVEKEKVKKTEDRLN) are compositionally biased toward basic and acidic residues. Residues 624–633 (SSESYSSPSS) are compositionally biased toward low complexity. Over residues 634-653 (PRHDGRESLESEEEKDRDSD) the composition is skewed to basic and acidic residues. The segment covering 919-947 (LPTQNSSALNAATSAQPASTGISPSQSTV) has biased composition (polar residues). Residues 949 to 963 (PAVPTHTPGPAPSPS) show a composition bias toward pro residues. Residues 964 to 982 (PALTHSTAQSDSTSYISAV) show a composition bias toward polar residues. Residues 1119–1136 (VSCYNCGVSGHYAQDCKQ) form a CCHC-type zinc finger.

The sequence is that of Zinc finger CCHC domain-containing protein 2 (Zcchc2) from Mus musculus (Mouse).